The sequence spans 114 residues: Histone H3-6 (114 aa).

The segment covering 1-17 (NTGGKAPRKHIAHKQAK) has biased composition (basic residues). Residues 1 to 32 (NTGGKAPRKHIAHKQAKKSSAAAATGGVKKPH) form a disordered region. The segment covering 18 to 28 (KSSAAAATGGV) has biased composition (low complexity).

The protein belongs to the histone H3 family. As to quaternary structure, the nucleosome is a histone octamer containing two molecules each of H2A, H2B, H3 and H4 assembled in one H3-H4 heterotetramer and two H2A-H2B heterodimers. The octamer wraps approximately 147 bp of DNA.

Its subcellular location is the nucleus. The protein localises to the chromosome. Core component of nucleosome. Nucleosomes wrap and compact DNA into chromatin, limiting DNA accessibility to the cellular machineries which require DNA as a template. Histones thereby play a central role in transcription regulation, DNA repair, DNA replication and chromosomal stability. DNA accessibility is regulated via a complex set of post-translational modifications of histones, also called histone code, and nucleosome remodeling. This Stylonychia lemnae (Ciliate) protein is Histone H3-6 (H3-6).